The chain runs to 21 residues: VIGGDECNINEHRSLVAIFDS.

This sequence belongs to the peptidase S1 family. Snake venom subfamily. As to quaternary structure, monomer. Expressed by the venom gland.

The protein localises to the secreted. Inhibited by PMSF, bovine aprotinin (APR), and soybean trypsin inhibitor (STI). Is not inhibited by EDTA, beta-mercaptoethanol, and high temperature (85 degrees Celsius). Its function is as follows. Snake venom serine protease that completely cleaves fibrinogen Aalpha chain (FGA), partially cleaves Bbeta chain (FGB) and has no activity on gamma chain. Is more potent that A2 and A3 alpha-fibrinogenases. Very active within 5 minutes. In Crotalus atrox (Western diamondback rattlesnake), this protein is Alpha-fibrinogenase A1.